Here is a 511-residue protein sequence, read N- to C-terminus: Immunoglobulin-binding protein EibD (511 aa).

Residues 1–26 (MSKKFTMTLLSSSLAGLLVMSGGVSA) form the signal peptide. Residues 27–417 (QNGTYSVLQD…SKAIAANTRT (391 aa)) are surface exposed passenger domain. Over 27 to 460 (QNGTYSVLQD…GLFQPYSVGK (434 aa)) the chain is Extracellular. The tract at residues 161-287 (DAKASGEFSV…TGTESDKTYG (127 aa)) is head domain. Positions 288 to 303 (TRVLGGLSDGTRNSDA) are neck. Residues 304–349 (ATVGQLNRKVGGVYDDVKARITVESEKQKKYTDQKTSEVNEKVEAR) are right-handed coiled-coil (RHcc). Residues 304 to 349 (ATVGQLNRKVGGVYDDVKARITVESEKQKKYTDQKTSEVNEKVEAR) adopt a coiled-coil conformation. Positions 329-344 (EKQKKYTDQKTSEVNE) are required to bind IgA. Residues 350 to 375 (TTVGVDSDGKLTRAEGATKTIAVNDG) form a saddle domain region. Positions 376 to 441 (LVALSGRTDR…INENHKEMKR (66 aa)) form a coiled coil. The interval 376–441 (LVALSGRTDR…INENHKEMKR (66 aa)) is left-handed coiled-coil (LHcc). Positions 384–418 (DRIDYAVGAIDGRVTRNTQSIEKNSKAIAANTRTL) are required to bind IgG. The interval 418 to 460 (LQQHSARLDSQQRQINENHKEMKRAAAQSAALTGLFQPYSVGK) is outer membrane translocation of the passenger domain. 4 beta stranded membrane-spanning segments follow: residues 461–471 (FNATAAVGGYS), 474–485 (QALAVGVGYRFN), 488–497 (TAAKAGVAFS), and 501–511 (ASWNVGVNFEF). Positions 461–511 (FNATAAVGGYSDQQALAVGVGYRFNEQTAAKAGVAFSDGDASWNVGVNFEF) are translocator domain.

It belongs to the autotransporter-2 (AT-2) (TC 1.B.40) family. Eib subfamily. In terms of assembly, homotrimer; can probably form mixed heterotrimers in vivo. Will form mixed heterotrimers with EibA or EibC; these are correctly located in the outer membrane and bind IgG Fc, although less well than homotrimers. In denaturing gels runs as a band of about 210 kDa. Binds the Fc portion of immunoglobulins; binds more than 1 Fc per subunit, can be modeled to bind 3 Fc per trimer.

Its subcellular location is the cell surface. It localises to the cell outer membrane. In terms of biological role, binds (in a non-immune fashion) to the Fc portion of human IgA and IgG; binding occurs on the cell surface. Confers the ability to survive exposure to human serum exposure. Binds to the Fc portion of human IgG, IgA and to whole mouse antibodies also via Fc. Upon overexpression cells acquire an extra cell surface layer that forms a zipper-like contact between cells; cells autoagglutinate and form biofilm more readily, suggesting it may play a role in defense against a host. The polypeptide is Immunoglobulin-binding protein EibD (Escherichia coli).